The following is a 385-amino-acid chain: Rubredoxin-NAD(+) reductase (385 aa).

Residues 8-11 (AGTA), 32-33 (SR), I79, E156, D275, and I293 each bind FAD.

Belongs to the FAD-dependent oxidoreductase family. Homodimer. It depends on FAD as a cofactor.

It localises to the cytoplasm. The catalysed reaction is 2 reduced [rubredoxin] + NAD(+) + H(+) = 2 oxidized [rubredoxin] + NADH. The protein operates within hydrocarbon metabolism; alkane degradation. Its function is as follows. Involved in the hydrocarbon hydroxylating system, which transfers electrons from NADH to rubredoxin reductase and then through rubredoxin to alkane 1 monooxygenase. The chain is Rubredoxin-NAD(+) reductase (alkT) from Ectopseudomonas oleovorans (Pseudomonas oleovorans).